Consider the following 693-residue polypeptide: Translation factor GUF1 homolog, chloroplastic (693 aa).

The N-terminal 51 residues, 1–51, are a transit peptide targeting the chloroplast; that stretch reads MATDLSSSSTLLLSRNCKTPPFYHTTNSLSLSKTHHLYASRNAVVSRLRLL. Positions 86 to 267 constitute a tr-type G domain; it reads SNIRNFCIIA…AIVERIPSPR (182 aa). GTP contacts are provided by residues 95–102, 160–164, and 214–217; these read AHIDHGKS, DTPGH, and NKID.

This sequence belongs to the TRAFAC class translation factor GTPase superfamily. Classic translation factor GTPase family. LepA subfamily.

It localises to the plastid. The protein resides in the chloroplast. The catalysed reaction is GTP + H2O = GDP + phosphate + H(+). In terms of biological role, promotes chloroplast protein synthesis. May act as a fidelity factor of the translation reaction, by catalyzing a one-codon backward translocation of tRNAs on improperly translocated ribosomes. The chain is Translation factor GUF1 homolog, chloroplastic from Ricinus communis (Castor bean).